Consider the following 380-residue polypeptide: DNA-directed RNA polymerase subunit Rpo1C (380 aa).

It belongs to the RNA polymerase beta' chain family. In terms of assembly, part of the RNA polymerase complex.

It localises to the cytoplasm. The enzyme catalyses RNA(n) + a ribonucleoside 5'-triphosphate = RNA(n+1) + diphosphate. Its function is as follows. DNA-dependent RNA polymerase (RNAP) catalyzes the transcription of DNA into RNA using the four ribonucleoside triphosphates as substrates. Forms part of the jaw domain. In Archaeoglobus fulgidus (strain ATCC 49558 / DSM 4304 / JCM 9628 / NBRC 100126 / VC-16), this protein is DNA-directed RNA polymerase subunit Rpo1C.